A 1067-amino-acid polypeptide reads, in one-letter code: Hemoglobin and hemoglobin-haptoglobin-binding protein B (1067 aa).

A signal peptide spans 1–24 (MTNFKFSLLACSIAFALNASTAYA). A run of 6 repeats spans residues 26–29 (QPTN), 30–33 (QPTN), 34–37 (QPTN), 38–41 (QPTN), 42–45 (QPTN), and 46–49 (QPTN). A 6 X 4 AA tandem repeats of Q-P-T-N region spans residues 26–49 (QPTNQPTNQPTNQPTNQPTNQPTN). Low complexity predominate over residues 26 to 51 (QPTNQPTNQPTNQPTNQPTNQPTNQN). Residues 26-53 (QPTNQPTNQPTNQPTNQPTNQPTNQNSN) are disordered. The short motif at 59-66 (EQINVSGS) is the TonB box element. The TBDR plug domain maps to 71–196 (NIKEKKVGET…LGGSVIFETK (126 aa)). Residues 204–1067 (DKDYYLSYKR…NYRMSVQFEF (864 aa)) form the TBDR beta-barrel domain. The TonB C-terminal box signature appears at 1050–1067 (NRFYAPGRNYRMSVQFEF).

It belongs to the TonB-dependent receptor family. Hemoglobin/haptoglobin binding protein subfamily.

Its subcellular location is the cell outer membrane. Acts as a receptor for hemoglobin or the hemoglobin/haptoglobin complex of the human host and is required for heme uptake. The sequence is that of Hemoglobin and hemoglobin-haptoglobin-binding protein B (hgbB) from Haemophilus influenzae.